The chain runs to 67 residues: DNA-directed RNA polymerase subunit omega (67 aa).

The protein belongs to the RNA polymerase subunit omega family. In terms of assembly, the RNAP catalytic core consists of 2 alpha, 1 beta, 1 beta' and 1 omega subunit. When a sigma factor is associated with the core the holoenzyme is formed, which can initiate transcription.

It catalyses the reaction RNA(n) + a ribonucleoside 5'-triphosphate = RNA(n+1) + diphosphate. Promotes RNA polymerase assembly. Latches the N- and C-terminal regions of the beta' subunit thereby facilitating its interaction with the beta and alpha subunits. The sequence is that of DNA-directed RNA polymerase subunit omega from Nautilia profundicola (strain ATCC BAA-1463 / DSM 18972 / AmH).